Here is a 367-residue protein sequence, read N- to C-terminus: UDP-N-acetylglucosamine--N-acetylmuramyl-(pentapeptide) pyrophosphoryl-undecaprenol N-acetylglucosamine transferase (367 aa).

Residues 13 to 15, asparagine 127, arginine 168, serine 200, isoleucine 251, and glutamine 296 each bind UDP-N-acetyl-alpha-D-glucosamine; that span reads TGG.

It belongs to the glycosyltransferase 28 family. MurG subfamily.

Its subcellular location is the cell inner membrane. The enzyme catalyses di-trans,octa-cis-undecaprenyl diphospho-N-acetyl-alpha-D-muramoyl-L-alanyl-D-glutamyl-meso-2,6-diaminopimeloyl-D-alanyl-D-alanine + UDP-N-acetyl-alpha-D-glucosamine = di-trans,octa-cis-undecaprenyl diphospho-[N-acetyl-alpha-D-glucosaminyl-(1-&gt;4)]-N-acetyl-alpha-D-muramoyl-L-alanyl-D-glutamyl-meso-2,6-diaminopimeloyl-D-alanyl-D-alanine + UDP + H(+). It functions in the pathway cell wall biogenesis; peptidoglycan biosynthesis. Its function is as follows. Cell wall formation. Catalyzes the transfer of a GlcNAc subunit on undecaprenyl-pyrophosphoryl-MurNAc-pentapeptide (lipid intermediate I) to form undecaprenyl-pyrophosphoryl-MurNAc-(pentapeptide)GlcNAc (lipid intermediate II). In Flavobacterium psychrophilum (strain ATCC 49511 / DSM 21280 / CIP 103535 / JIP02/86), this protein is UDP-N-acetylglucosamine--N-acetylmuramyl-(pentapeptide) pyrophosphoryl-undecaprenol N-acetylglucosamine transferase.